The primary structure comprises 683 residues: WD repeat-containing protein 48 homolog (683 aa).

WD repeat units lie at residues Ser-27–Tyr-82, Gln-88–Cys-130, Thr-133–Asn-167, Gly-176–Lys-215, Gly-218–Thr-257, Ala-260–Leu-299, and Lys-302–Ile-343. Positions Leu-341 to Ser-364 are disordered. The segment covering Ser-351–Ser-364 has biased composition (low complexity). One copy of the WD 8 repeat lies at Pro-389 to Asp-428.

It belongs to the WD repeat WDR48 family. As to quaternary structure, interacts with usp-46; the interaction increases the catalytic activity of usp-46 in the presence of wdr-20. As to expression, expressed in several head neurons and cells in the tail including the anal depressor cell.

Together with wdr-20, binds to and stimulates the activity of the deubiquitinating enzyme usp-46, leading to deubiquitination and stabilization of the glr-1 glutamate receptor. The sequence is that of WD repeat-containing protein 48 homolog (wdr-48) from Caenorhabditis elegans.